The following is a 203-amino-acid chain: IMP cyclohydrolase (203 aa).

The protein belongs to the archaeal IMP cyclohydrolase family.

It catalyses the reaction IMP + H2O = 5-formamido-1-(5-phospho-D-ribosyl)imidazole-4-carboxamide. Its pathway is purine metabolism; IMP biosynthesis via de novo pathway; IMP from 5-formamido-1-(5-phospho-D-ribosyl)imidazole-4-carboxamide: step 1/1. Its function is as follows. Catalyzes the cyclization of 5-formylamidoimidazole-4-carboxamide ribonucleotide to IMP. The sequence is that of IMP cyclohydrolase from Methanococcus aeolicus (strain ATCC BAA-1280 / DSM 17508 / OCM 812 / Nankai-3).